A 242-amino-acid polypeptide reads, in one-letter code: Small ribosomal subunit protein uS2 (242 aa).

It belongs to the universal ribosomal protein uS2 family.

In Shouchella clausii (strain KSM-K16) (Alkalihalobacillus clausii), this protein is Small ribosomal subunit protein uS2.